Consider the following 190-residue polypeptide: MPPRPRFDRRAPVRELPNINERIKYPQLRVVDSDGKQLGVIDRLKALEIANQRELDLVLVSEKANPPVCRIMDYGKYKFEQEKKAKEARKKSHQTEVKEVKMRYKIDKHDYDVRIGQATKFLKSGDKVKCTVIFRGREIQHSNLAETLLLKMASDLEEQSEVQQKPKREGRNMIMFLSPRKSPLIKKDNE.

A disordered region spans residues 159–190 (QSEVQQKPKREGRNMIMFLSPRKSPLIKKDNE).

It belongs to the IF-3 family. Monomer.

Its subcellular location is the cytoplasm. IF-3 binds to the 30S ribosomal subunit and shifts the equilibrium between 70S ribosomes and their 50S and 30S subunits in favor of the free subunits, thus enhancing the availability of 30S subunits on which protein synthesis initiation begins. This Prochlorococcus marinus (strain MIT 9215) protein is Translation initiation factor IF-3.